We begin with the raw amino-acid sequence, 2521 residues long: Piezo-type mechanosensitive ion channel component 1 (2521 aa).

Topologically, residues 1-12 are cytoplasmic; it reads MEPHVLGAVLYW. Residues 13 to 25 traverse the membrane as a helical segment; that stretch reads LLLPCALLAACLL. Residues 26–28 lie on the Extracellular side of the membrane; sequence RFS. The helical transmembrane segment at 29-44 threads the bilayer; it reads GLSLVYLLFLLLLPWF. Topologically, residues 45 to 58 are cytoplasmic; it reads PGPTRCGLQGHTGR. A helical transmembrane segment spans residues 59-81; sequence LLRALLGLSLLFLVAHLALQICL. Residues 82–121 are Extracellular-facing; that stretch reads HIVPRLDQLLGPSCSRWETLSRHIGVTRLDLKDIPNAIRL. A helical transmembrane segment spans residues 122–138; sequence VAPDLGILVVSSVCLGI. The Cytoplasmic portion of the chain corresponds to 139 to 194; the sequence is CGRLARNTRQSPHPRELDDDERDVDASPTAGLQEAATLAPTRRSRLAARFRVTAHW. Residues 195–214 traverse the membrane as a helical segment; that stretch reads LLVAAGRVLAVTLLALAGIA. Topologically, residues 215–216 are extracellular; the sequence is HP. The chain crosses the membrane as a helical span at residues 217 to 236; it reads SALSSVYLLLFLALCTWWAC. Over 237–247 the chain is Cytoplasmic; the sequence is HFPISTRGFSR. Residues 248-268 traverse the membrane as a helical segment; the sequence is LCVAVGCFGAGHLICLYCYQM. The Extracellular portion of the chain corresponds to 269-309; it reads PLAQALLPPAGIWARVLGLKDFVGPTNCSSPHALVLNTGLD. An N-linked (GlcNAc...) asparagine glycan is attached at asparagine 295. A helical membrane pass occupies residues 310–330; sequence WPVYASPGVLLLLCYATASLR. At 331–417 the chain is on the cytoplasmic side; it reads KLRAYRPSGQ…EASPLHSLGH (87 aa). A helical transmembrane segment spans residues 418–438; sequence LIMDQSYVCALIAMMVWSITY. The Extracellular portion of the chain corresponds to 439 to 440; sequence HS. A helical membrane pass occupies residues 441 to 456; that stretch reads WLTFVLLLWACLIWTV. Residues 457–461 are Cytoplasmic-facing; the sequence is RSRHQ. Residues 462 to 484 traverse the membrane as a helical segment; that stretch reads LAMLCSPCILLYGMTLCCLRYVW. At 485–512 the chain is on the extracellular side; that stretch reads AMDLRPELPTTLGPVSLRQLGLEHTRYP. Residues 513–530 form a helical membrane-spanning segment; that stretch reads CLDLGAMLLYTLTFWLLL. Residues 531–574 lie on the Cytoplasmic side of the membrane; it reads RQFVKEKLLKWAESPAALTEVTVADTEPTRTQTLLQSLGELVKG. A helical membrane pass occupies residues 575–595; that stretch reads VYAKYWIYVCAGMFIVVSFAG. Residue arginine 596 is a topological domain, extracellular. A helical membrane pass occupies residues 597-617; sequence LVVYKIVYMFLFLLCLTLFQV. The Cytoplasmic portion of the chain corresponds to 618-627; the sequence is YYSLWRKLLK. The chain crosses the membrane as a helical span at residues 628 to 649; it reads AFWWLVVAYTMLVLIAVYTFQF. The Extracellular segment spans residues 650–679; sequence QDFPAYWRNLTGFTDEQLGDLGLEQFSVSE. A helical membrane pass occupies residues 680–696; the sequence is LFSSILVPGFFLLACIL. Topologically, residues 697 to 816 are cytoplasmic; that stretch reads QLHYFHRPFM…RRLLELHVFK (120 aa). Residue threonine 734 is modified to Phosphothreonine. Residues 738–769 form a disordered region; that stretch reads REEQQEHQQQQQEEEEEEEDSRDEGLGVATPH. The span at 749 to 759 shows a compositional bias: acidic residues; the sequence is QEEEEEEEDSR. Position 758 is a phosphoserine (serine 758). The chain crosses the membrane as a helical span at residues 817-828; it reads LVALYTVWVALK. The Extracellular segment spans residues 829–831; it reads EVS. Residues 832–845 form a helical membrane-spanning segment; that stretch reads VMNLLLVVLWAFAL. The Cytoplasmic segment spans residues 846–859; the sequence is PYPRFRPMASCLST. The chain crosses the membrane as a helical span at residues 860–874; it reads VWTCVIIVCKMLYQL. The Extracellular portion of the chain corresponds to 875-926; sequence KVVNPQEYSSNCTEPFPNSTNLLPTEISQSLLYRGPVDPANWFGVRKGFPNL. Residues 927–954 traverse the membrane as a helical segment; that stretch reads GYIQNHLQVLLLLVFEAIVYRRQEHYRR. The Cytoplasmic segment spans residues 955 to 994; the sequence is QHQLAPLPAQAVFASGTRQQLDQDLLGCLKYFINFFFYKF. A helical membrane pass occupies residues 995-1010; the sequence is GLEICFLMAVNVIGQR. At 1011–1012 the chain is on the extracellular side; that stretch reads MN. Residues 1013-1028 traverse the membrane as a helical segment; sequence FLVTLHGCWLVAILTR. The Cytoplasmic portion of the chain corresponds to 1029–1041; that stretch reads RHRQAIARLWPNY. The helical transmembrane segment at 1042 to 1057 threads the bilayer; it reads CLFLALFLLYQYLLCL. Residues 1058-1096 are Extracellular-facing; the sequence is GMPPALCIDYPWRWSRAVPMNSALIKWLYLPDFFRAPNS. A helical transmembrane segment spans residues 1097-1118; that stretch reads TNLISDFLLLLCASQQWQVFSA. Over 1119 to 1153 the chain is Cytoplasmic; sequence ERTEEWQRMAGVNTDRLEPLRGEPNPVPNFIHCRS. Residues 1154–1180 form a helical membrane-spanning segment; that stretch reads YLDMLKVAVFRYLFWLVLVVVFVTGAT. Residues 1181–1185 are Extracellular-facing; it reads RISIF. A helical membrane pass occupies residues 1186–1204; it reads GLGYLLACFYLLLFGTALL. At 1205–1217 the chain is on the cytoplasmic side; sequence QRDTRARLVLWDC. Residues 1218-1236 traverse the membrane as a helical segment; sequence LILYNVTVIISKNMLSLLA. Residues 1237 to 1285 are Extracellular-facing; the sequence is CVFVEQMQTGFCWVIQLFSLVCTVKGYYDPKEMMDRDQDCLLPVEEAGI. The chain crosses the membrane as a helical span at residues 1286–1302; that stretch reads IWDSVCFFFLLLQRRVF. The Cytoplasmic segment spans residues 1303–1656; the sequence is LSHYYLHVRA…ELLLDRRLRI (354 aa). The stretch at 1339–1368 forms a coiled coil; that stretch reads HRRIEEKSLAQLKRQMERIRAKQEKHRQGR. Disordered stretches follow at residues 1356–1402, 1462–1498, and 1576–1630; these read RIRA…RRQW, RQQEQEQARQEQAGQLPTGGGPSQEVEPAEGPEEAAA, and TLPG…DPGE. The segment covering 1385–1398 has biased composition (low complexity); that stretch reads LEPGPDSPGGSSPP. Phosphoserine is present on residues serine 1391 and serine 1396. Residues serine 1636 and serine 1646 each carry the phosphoserine modification. A helical membrane pass occupies residues 1657-1700; the sequence is PELEEAELFAEGQGRALRLLRAVYQCVAAHSELLCYFIIILNHM. At 1701-1704 the chain is on the extracellular side; the sequence is VTAS. The helical transmembrane segment at 1705-1720 threads the bilayer; the sequence is AGSLVLPVLVFLWAML. Residues 1721–1728 lie on the Cytoplasmic side of the membrane; sequence SIPRPSKR. Residues 1729–1747 form a helical membrane-spanning segment; sequence FWMTAIVFTEIAVVVKYLF. Residues 1748–1779 are Extracellular-facing; that stretch reads QFGFFPWNSHVVLRRYENKPYFPPRILGLEKT. A helical membrane pass occupies residues 1780–1801; the sequence is DGYIKYDLVQLMALFFHRSQLL. Residues 1802-1960 are Cytoplasmic-facing; it reads CYGLWDHEED…HTKYRAATDV (159 aa). The span at 1811–1822 shows a compositional bias: basic and acidic residues; that stretch reads DSPSKEHDKSGE. Positions 1811–1921 are disordered; it reads DSPSKEHDKS…RPSRSGGRVR (111 aa). The residue at position 1854 (threonine 1854) is a Phosphothreonine. Basic and acidic residues predominate over residues 1859-1868; the sequence is VELRPRDTRR. Residues 1869-1878 show a composition bias toward basic residues; that stretch reads ISLRFRRRKK. Positions 1890–1903 are enriched in acidic residues; sequence EAEDREEEEGEEEK. The segment covering 1904–1913 has biased composition (basic and acidic residues); the sequence is EAPTGREKRP. A helical membrane pass occupies residues 1961 to 1980; it reads YALMFLADVVDFIIIIFGFW. Residues 1981–2000 lie on the Extracellular side of the membrane; it reads AFGKHSAATDITSSLSDDQV. A helical transmembrane segment spans residues 2001-2017; that stretch reads PEAFLVMLLIQFSTMVV. Topologically, residues 2018–2031 are cytoplasmic; the sequence is DRALYLRKTVLGKL. Residues 2032–2052 traverse the membrane as a helical segment; that stretch reads AFQVALVLAIHLWMFFILPAV. The Extracellular segment spans residues 2053–2060; it reads TERMFNQN. The chain crosses the membrane as a helical span at residues 2061–2076; it reads VVAQLWYFVKCIYFAL. The Cytoplasmic segment spans residues 2077–2176; sequence SAYQIRCGYP…KKKIVKYGMG (100 aa). The chain crosses the membrane as a helical span at residues 2177 to 2197; it reads GLIILFLIAIIWFPLLFMSLV. The Extracellular segment spans residues 2198–2431; it reads RSVVGVVNQP…IFSDKVSPPS (234 aa). An N-linked (GlcNAc...) asparagine glycan is attached at asparagine 2294. A disulfide bond links cysteine 2411 and cysteine 2415. Residues 2432 to 2452 traverse the membrane as a helical segment; sequence LGFLAGYGIMGLYVSIVLVIG. The Cytoplasmic segment spans residues 2453–2521; the sequence is KFVRGFFSEI…TMIKWTREKE (69 aa).

This sequence belongs to the PIEZO (TC 1.A.75) family. In terms of assembly, homotrimer; the homotrimer forms a propeller-shaped Piezo channel with a cation-ion conducting pore. Heterotrimeric interaction may occur between PIEZO1 and PIEZO2. Interacts with PKD2. Interacts with STOML3. Interacts with TMC1, TMC2, PCDH15 and CIB2; the interaction may be part of the MET complex. Interacts with MDFIC (via C-terminus); the interaction prolongs Piezo channel inactivation. Interacts with MDFI (via C-terminus); the interaction prolongs Piezo channel inactivation. As to expression, expressed in numerous tissues. In normal brain, expressed exclusively in neurons, not in astrocytes. In Alzheimer disease brains, expressed in about half of the activated astrocytes located around classical senile plaques. In Parkinson disease substantia nigra, not detected in melanin-containing neurons nor in activated astrocytes. Expressed in erythrocytes (at protein level). Expressed in myoblasts (at protein level).

It localises to the endoplasmic reticulum membrane. It is found in the endoplasmic reticulum-Golgi intermediate compartment membrane. The protein localises to the cell membrane. Its subcellular location is the cell projection. The protein resides in the lamellipodium membrane. The enzyme catalyses K(+)(in) = K(+)(out). It catalyses the reaction Na(+)(in) = Na(+)(out). The catalysed reaction is Ca(2+)(in) = Ca(2+)(out). It carries out the reaction Mg(2+)(in) = Mg(2+)(out). Regulated by auxillary subunits MDFIC and MDFI. Down-regulated by phosphatidylserines exposed on the cell surface. Divalent ions decrease the single-channel permeability of K(+). In terms of biological role, pore-forming subunit of the mechanosensitive non-specific cation Piezo channel required for rapidly adapting mechanically activated (MA) currents and has a key role in sensing touch and tactile pain. Piezo channels are homotrimeric three-blade propeller-shaped structures that utilize a cap-motion and plug-and-latch mechanism to gate their ion-conducting pathways. Generates currents characterized by a linear current-voltage relationship that are sensitive to ruthenium red and gadolinium. Conductance to monovalent alkali ions is highest for K(+), intermediate for Na(+) and lowest for Li(+). Divalent ions except for Mn(2+) permeate the channel but more slowly than the monovalent ions and they also reduce K(+) currents. Plays a key role in epithelial cell adhesion by maintaining integrin activation through R-Ras recruitment to the ER, most probably in its activated state, and subsequent stimulation of calpain signaling. In inner ear hair cells, PIEZO1/2 subunits may constitute part of the mechanotransducer (MET) non-selective cation channel complex where they may act as pore-forming ion-conducting component in the complex. In the kidney, may contribute to the detection of intraluminal pressure changes and to urine flow sensing. Acts as a shear-stress sensor that promotes endothelial cell organization and alignment in the direction of blood flow through calpain activation. Plays a key role in blood vessel formation and vascular structure in both development and adult physiology. Acts as a sensor of phosphatidylserine (PS) flipping at the plasma membrane and governs morphogenesis of muscle cells. In myoblasts, flippase-mediated PS enrichment at the inner leaflet of plasma membrane triggers channel activation and Ca2+ influx followed by Rho GTPases signal transduction, leading to assembly of cortical actomyosin fibers and myotube formation. The sequence is that of Piezo-type mechanosensitive ion channel component 1 from Homo sapiens (Human).